A 71-amino-acid polypeptide reads, in one-letter code: Small ribosomal subunit protein bS21 (71 aa).

This sequence belongs to the bacterial ribosomal protein bS21 family.

The sequence is that of Small ribosomal subunit protein bS21 from Shewanella sediminis (strain HAW-EB3).